The primary structure comprises 682 residues: Methionine--tRNA ligase (682 aa).

Residues 12 to 22 carry the 'HIGH' region motif; that stretch reads PYANGAIHLGH. 4 residues coordinate Zn(2+): cysteine 143, cysteine 146, cysteine 156, and cysteine 159. Positions 328–332 match the 'KMSKS' region motif; that stretch reads KMSKS. Lysine 331 is a binding site for ATP. One can recognise a tRNA-binding domain in the interval 580–682; the sequence is DFAKLDLRVA…EGIRPGMQVK (103 aa).

Belongs to the class-I aminoacyl-tRNA synthetase family. MetG type 1 subfamily. As to quaternary structure, homodimer. Zn(2+) is required as a cofactor.

It localises to the cytoplasm. The catalysed reaction is tRNA(Met) + L-methionine + ATP = L-methionyl-tRNA(Met) + AMP + diphosphate. Its function is as follows. Is required not only for elongation of protein synthesis but also for the initiation of all mRNA translation through initiator tRNA(fMet) aminoacylation. In Actinobacillus pleuropneumoniae serotype 7 (strain AP76), this protein is Methionine--tRNA ligase.